A 153-amino-acid polypeptide reads, in one-letter code: CRIB domain-containing protein RIC4 (153 aa).

One can recognise a CRIB domain in the interval 99-112 (IGVPTNVKHVSHIG).

Interacts with ARAC4/ROP2 and ARAC11/ROP1. Expressed in roots, leaves, stems, flowers, siliques and pollen.

It localises to the cell membrane. Functionally, functions as a downstream effector of Rho-related GTP binding proteins of the 'Rho of Plants' (ROPs) family. Participates in the propagation of ROP GTPase signals in specific cellular responses. Required for actin cortical microfilament assembly. Activated by ARAC4/ROP2 to promote the assembly of cortical actin microfilaments required for lobe formation and lateral expansion of pavement cells. Interaction with, and activation by ARAC4/ROP2 is inhibited by RIC1. Functions as a downstream effector of ARAC11/ROP1 to promote the assembly of apical F-actin associated with vesicle accumulation in the tip of the growing pollen tube. Counteracts the ARAC11/ROP1-RIC3 pathway, which activates calcium signaling that leads to apical F-actin disassembly associated with exocytosis, to control actin dynamics and pollen tube apical growth. Downstream of ARAC11/ROP1, is involved in the growth responses to the root-colonizing endophytic fungus P.indica. This is CRIB domain-containing protein RIC4 (RIC4) from Arabidopsis thaliana (Mouse-ear cress).